Here is a 375-residue protein sequence, read N- to C-terminus: DnaJ homolog subfamily B member 12 (375 aa).

Position 1 is an N-acetylmethionine (M1). The Cytoplasmic segment spans residues 1-243 (MESNKDEAER…DRRDNQGDGG (243 aa)). The disordered stretch occupies residues 45–92 (ALIESLNQKPQTAGDQPPPTDTTHATHRKAGGTDAPSANGEAGGESTK). Positions 49–58 (SLNQKPQTAG) are enriched in polar residues. The J domain occupies 112–176 (YEILGVSRGA…RKQYDQFGDD (65 aa)). Residue H185 is modified to Pros-methylhistidine. The helical transmembrane segment at 244–264 (LGVFVQLMPILILILVSALSQ) threads the bilayer. Topologically, residues 265 to 375 (LMVSSPPYSL…LSEVQASLHG (111 aa)) are lumenal.

This sequence belongs to the DnaJ family. DNAJB12/DNAJB14 subfamily. As to quaternary structure, homodimer and homotetramer. Interacts (via J domain) with HSPA8/Hsc70. Forms a multiprotein complex, at least composed of DNAJB12, DNAJB14, HSPA8/Hsc70 and SGTA; interaction with DNAJB14 and HSPA8/Hsc70 is direct. In terms of processing, methylated at His-185 by METTL9.

The protein localises to the endoplasmic reticulum membrane. The protein resides in the nucleus membrane. In terms of biological role, acts as a co-chaperone with HSPA8/Hsc70; required to promote protein folding and trafficking, prevent aggregation of client proteins, and promote unfolded proteins to endoplasmic reticulum-associated degradation (ERAD) pathway. Acts by determining HSPA8/Hsc70's ATPase and polypeptide-binding activities. Can also act independently of HSPA8/Hsc70: together with DNAJB14, acts as a chaperone that promotes maturation of potassium channels KCND2 and KCNH2 by stabilizing nascent channel subunits and assembling them into tetramers. While stabilization of nascent channel proteins is dependent on HSPA8/Hsc70, the process of oligomerization of channel subunits is independent of HSPA8/Hsc70. When overexpressed, forms membranous structures together with DNAJB14 and HSPA8/Hsc70 within the nucleus; the role of these structures, named DJANGOs, is still unclear. Its function is as follows. (Microbial infection) In case of infection by polyomavirus, involved in the virus endoplasmic reticulum membrane penetration and infection. The protein is DnaJ homolog subfamily B member 12 of Homo sapiens (Human).